Here is a 153-residue protein sequence, read N- to C-terminus: Ribosome maturation factor RimP (153 aa).

It belongs to the RimP family.

Its subcellular location is the cytoplasm. Required for maturation of 30S ribosomal subunits. In Acidithiobacillus ferrooxidans (strain ATCC 53993 / BNL-5-31) (Leptospirillum ferrooxidans (ATCC 53993)), this protein is Ribosome maturation factor RimP.